The following is a 408-amino-acid chain: SERPINE1 mRNA-binding protein 1 (408 aa).

S25 is subject to Phosphoserine. Disordered stretches follow at residues 33-292 and 328-408; these read AAEN…TLDE and SKSE…PALA. Over residues 51 to 68 the composition is skewed to low complexity; the sequence is AKSAAQAAAQTNSNAAGK. K52 carries the post-translational modification N6-acetyllysine; alternate. A Glycyl lysine isopeptide (Lys-Gly) (interchain with G-Cter in SUMO1); alternate cross-link involves residue K52. K68 carries the N6-acetyllysine modification. Basic and acidic residues-rich tracts occupy residues 70–80, 89–114, and 122–162; these read LRKESQKDRKN, VDKKEETQPPVALKKEGIRRVGRRPD, and KIID…DRPI. A Glycyl lysine isopeptide (Lys-Gly) (interchain with G-Cter in SUMO1); alternate cross-link involves residue K102. Residue K102 forms a Glycyl lysine isopeptide (Lys-Gly) (interchain with G-Cter in SUMO2); alternate linkage. 2 positions are modified to N6-acetyllysine: K122 and K140. Residues 164–182 are compositionally biased toward gly residues; that stretch reads GRGGLGRGRGGRGRGMGRG. An omega-N-methylarginine mark is found at R165 and R188. Positions 183 to 199 are enriched in basic and acidic residues; sequence DGFDSRGKREFDRHSGS. S197 is subject to Phosphoserine. Phosphoserine; by MTOR is present on S199. A phosphoserine mark is found at S203, S205, and S208. K211 is modified (N6-acetyllysine; alternate). K211 participates in a covalent cross-link: Glycyl lysine isopeptide (Lys-Gly) (interchain with G-Cter in SUMO2); alternate. The residue at position 216 (R216) is an Omega-N-methylarginine. S221 carries the post-translational modification Phosphoserine. Residue H222 forms a Glycyl lysine isopeptide (Lys-Gly) (interchain with G-Cter in SUMO2) linkage. The residue at position 226 (T226) is a Phosphothreonine; by MTOR. K228 participates in a covalent cross-link: Glycyl lysine isopeptide (Lys-Gly) (interchain with G-Cter in SUMO1); alternate. Residue K228 forms a Glycyl lysine isopeptide (Lys-Gly) (interchain with G-Cter in SUMO2); alternate linkage. Residue K228 forms a Glycyl lysine isopeptide (Lys-Gly) (interchain with G-Cter in SUMO2) linkage. Residues L231, S234, and Y237 each carry the phosphoserine modification. S234 is modified (phosphothreonine). K240 bears the Phosphothreonine mark. Positions 240–253 are enriched in polar residues; sequence KQISYNYSDLDQSN. Basic and acidic residues predominate over residues 261-275; it reads GEEHHPVADTENKEN. A Glycyl lysine isopeptide (Lys-Gly) (interchain with G-Cter in SUMO1); alternate cross-link involves residue K281. A Glycyl lysine isopeptide (Lys-Gly) (interchain with G-Cter in SUMO2); alternate cross-link involves residue K281. 2 stretches are compositionally biased toward basic and acidic residues: residues 282–292 and 328–342; these read EEGPKEMTLDE and SKSEEAHAEDSVMDH. At K329 the chain carries N6-acetyllysine. Phosphoserine is present on S330. Over residues 363–372 the composition is skewed to gly residues; the sequence is GRPGRGGRGG. An omega-N-methylarginine mark is found at R364, R367, and R370. Phosphoserine is present on residues S392 and S394.

This sequence belongs to the SERBP1-HABP4 family. Associates with mature 80S ribosomes. Interacts with EEF2/eEF2; interaction sequesters EEF2/eEF2 at the A-site of the ribosome, thereby blocking the interaction sites of the mRNA-tRNA complex, promoting ribosome stabilization and hibernation. Interacts with SPIN1. Interacts with CHD3 and TDRD3. Interacts with ZDHHC17 (via ANK repeats). Post-translationally, phosphorylation by MTOR inhibits SERBP1 and relieves ribosome hibernation. As to expression, expressed at high level in the heart, skeletal muscle and kidney, and at low levels in placenta, liver and brain.

It is found in the cytoplasm. Its subcellular location is the nucleus. The protein localises to the perinuclear region. Ribosome-binding protein that promotes ribosome hibernation, a process during which ribosomes are stabilized in an inactive state and preserved from proteasomal degradation. Acts via its association with EEF2/eEF2 factor, sequestering EEF2/eEF2 at the A-site of the ribosome and promoting ribosome stabilization and storage in an inactive state. May also play a role in the regulation of mRNA stability: binds to the 3'-most 134 nt of the SERPINE1/PAI1 mRNA, a region which confers cyclic nucleotide regulation of message decay. Seems to play a role in PML-nuclear bodies formation. This is SERPINE1 mRNA-binding protein 1 from Homo sapiens (Human).